Consider the following 123-residue polypeptide: uncharacterized protein (123 aa).

Positions 17–74 are disordered; sequence FQKKKKTGSQTRRTLKPQPQQLQQNLPKGHETTGHTYERVLQQQGSQERSPGLMSEDS. Thr-30 carries the phosphothreonine modification. The span at 32-43 shows a compositional bias: low complexity; it reads KPQPQQLQQNLP. Residues 44–54 are compositionally biased toward basic and acidic residues; that stretch reads KGHETTGHTYE. A Phosphoserine modification is found at Ser-62.

This is an uncharacterized protein from Homo sapiens (Human).